The primary structure comprises 164 residues: Bacterial ferritin (164 aa).

Residues 1–147 (MKGKKSVISR…QQLGLIARMG (147 aa)) enclose the Ferritin-like diiron domain. The Fe cation site is built by Glu18, Glu51, His54, Glu94, Glu129, and His132.

Belongs to the bacterioferritin family. In terms of assembly, heterooligomer of 24 subunits, arranged as 12 dimers, that are packed together to form an approximately spherical molecule with a central cavity, in which large amounts of iron can be deposited.

It catalyses the reaction 4 Fe(2+) + O2 + 4 H(+) = 4 Fe(3+) + 2 H2O. The catalysed reaction is Fe(2+)(in) = Fe(2+)(out). In terms of biological role, iron-storage protein, whose ferroxidase center binds Fe(2+), oxidizes it using dioxygen to Fe(3+), and participates in the subsequent Fe(3+) oxide mineral core formation within the central cavity of the BFR protein shell. This is Bacterial ferritin from Paramagnetospirillum magnetotacticum (Aquaspirillum magnetotacticum).